The chain runs to 410 residues: Peptidase T (410 aa).

Histidine 79 lines the Zn(2+) pocket. Aspartate 81 is a catalytic residue. A Zn(2+)-binding site is contributed by aspartate 142. Glutamate 176 acts as the Proton acceptor in catalysis. Zn(2+)-binding residues include glutamate 177, aspartate 199, and histidine 381.

This sequence belongs to the peptidase M20B family. Zn(2+) is required as a cofactor.

It localises to the cytoplasm. It carries out the reaction Release of the N-terminal residue from a tripeptide.. Its function is as follows. Cleaves the N-terminal amino acid of tripeptides. The sequence is that of Peptidase T from Bacillus cereus (strain ATCC 10987 / NRS 248).